Consider the following 1622-residue polypeptide: WD repeat-containing protein 97 (1622 aa).

WD repeat units lie at residues 187 to 233 (SEQG…RRLV), 290 to 329 (LHKTTISDLAYCEEVEAMVTASRDSTVKVWEADWQIRMVF), 331 to 370 (GHTGPVTAMTVLPNTTLVLSASQDGTLRTWDLQAAAQVGE), 552 to 592 (ELRC…TVFQ), 594 to 633 (EAHSPGPVVAIASTWNSIVSSGGDLTVKMWRVFPYAEESL), and 687 to 726 (DPTDHITGLCCCPTLKLYACSSLDCTVRIWTAENRLLRLL). 2 disordered regions span residues 1090–1112 (GEKPGEEGEEDKKEEEEEKEDEE) and 1453–1472 (LHPAGPAQLPGEPPPLEETD). A coiled-coil region spans residues 1094-1118 (GEEGEEDKKEEEEEKEDEELDWALA). Residues 1096–1112 (EGEEDKKEEEEEKEDEE) are compositionally biased toward acidic residues.

The protein is WD repeat-containing protein 97 of Homo sapiens (Human).